Here is a 256-residue protein sequence, read N- to C-terminus: MSDVARILKEARDQGRLTALDFAKEIFDDFIELHGDRNFRDDGAVIGGIGRLNGQAVTVVGIQKGKNLQDNLNRNFGQPHPEGYRKALRLMKQAEKFGRSVVTFINTAGAYPGVGAEERGQGEAIARNLMEMSDLKVPIIAIIIGEGGSGGALALAVADKVWMLENTIYSILSPEGFATILWKDGSRSEEAAELMKITSGELLNMGIVDKVIPERGYFTSEIIEAIKTAIVDELAELSQLSTEDLLEARYQRFRKY.

The CoA carboxyltransferase C-terminal domain maps to 1 to 236; that stretch reads MSDVARILKE…KTAIVDELAE (236 aa).

It belongs to the AccA family. As to quaternary structure, acetyl-CoA carboxylase is a heterohexamer composed of biotin carboxyl carrier protein (AccB), biotin carboxylase (AccC) and two subunits each of ACCase subunit alpha (AccA) and ACCase subunit beta (AccD).

The protein localises to the cytoplasm. The enzyme catalyses N(6)-carboxybiotinyl-L-lysyl-[protein] + acetyl-CoA = N(6)-biotinyl-L-lysyl-[protein] + malonyl-CoA. It functions in the pathway lipid metabolism; malonyl-CoA biosynthesis; malonyl-CoA from acetyl-CoA: step 1/1. In terms of biological role, component of the acetyl coenzyme A carboxylase (ACC) complex. First, biotin carboxylase catalyzes the carboxylation of biotin on its carrier protein (BCCP) and then the CO(2) group is transferred by the carboxyltransferase to acetyl-CoA to form malonyl-CoA. The sequence is that of Acetyl-coenzyme A carboxylase carboxyl transferase subunit alpha from Streptococcus thermophilus (strain ATCC BAA-250 / LMG 18311).